A 353-amino-acid chain; its full sequence is Anthranilate phosphoribosyltransferase (353 aa).

5-phospho-alpha-D-ribose 1-diphosphate contacts are provided by residues Gly-79, 82–83 (GD), Thr-87, 89–92 (NIST), 107–115 (KHGNHSFTS), and Ser-119. Gly-79 lines the anthranilate pocket. Ser-91 contributes to the Mg(2+) binding site. Residue Asn-110 participates in anthranilate binding. Residue Arg-165 participates in anthranilate binding. Residues Asp-223 and Glu-224 each contribute to the Mg(2+) site.

This sequence belongs to the anthranilate phosphoribosyltransferase family. In terms of assembly, homodimer. It depends on Mg(2+) as a cofactor.

It carries out the reaction N-(5-phospho-beta-D-ribosyl)anthranilate + diphosphate = 5-phospho-alpha-D-ribose 1-diphosphate + anthranilate. It functions in the pathway amino-acid biosynthesis; L-tryptophan biosynthesis; L-tryptophan from chorismate: step 2/5. In terms of biological role, catalyzes the transfer of the phosphoribosyl group of 5-phosphorylribose-1-pyrophosphate (PRPP) to anthranilate to yield N-(5'-phosphoribosyl)-anthranilate (PRA). The polypeptide is Anthranilate phosphoribosyltransferase (Methanococcoides burtonii (strain DSM 6242 / NBRC 107633 / OCM 468 / ACE-M)).